A 96-amino-acid polypeptide reads, in one-letter code: Large ribosomal subunit protein eL43 (96 aa).

The Zn(2+) site is built by Cys41, Cys44, Cys59, and Cys62. The segment at 41–62 (CPVCAFPKLKRAGTSIWVCEKC) adopts a C4-type zinc-finger fold.

Belongs to the eukaryotic ribosomal protein eL43 family. Putative zinc-binding subfamily. As to quaternary structure, part of the 50S ribosomal subunit. It depends on Zn(2+) as a cofactor.

In terms of biological role, binds to the 23S rRNA. In Methanococcus maripaludis (strain DSM 14266 / JCM 13030 / NBRC 101832 / S2 / LL), this protein is Large ribosomal subunit protein eL43.